Reading from the N-terminus, the 647-residue chain is LIM domain kinase 1 (647 aa).

2 consecutive LIM zinc-binding domains span residues 25-75 and 84-137; these read CASC…CKKD and CHGC…CGQC. One can recognise a PDZ domain in the interval 165-258; it reads LVSIPASAHG…LLQLTLEHDP (94 aa). At Ser210 the chain carries Phosphoserine. Phosphothreonine is present on Thr229. Residues 256 to 319 are disordered; that stretch reads HDPHDSLGHG…SPASQRKDLG (64 aa). A compositionally biased stretch (low complexity) spans 266 to 277; it reads PVSDPSPLSSPV. Polar residues-rich tracts occupy residues 278–289 and 298–313; these read HTPSGQAASSAR and SIDT…SPAS. Phosphoserine occurs at positions 298, 302, 307, and 310. Position 323 is a phosphoserine; by MAPKAPK2 (Ser323). At Ser337 the chain carries Phosphoserine. The region spanning 339–604 is the Protein kinase domain; sequence LIHGEVLGKG…PSFVKLEQWL (266 aa). ATP contacts are provided by residues 345 to 353 and Lys368; that span reads LGKGCFGQA. Asp460 is a catalytic residue. Thr508 bears the Phosphothreonine; by ROCK1 mark.

This sequence belongs to the protein kinase superfamily. TKL Ser/Thr protein kinase family. In terms of assembly, self-associates to form homodimers. Interacts with HSP90AA1; this interaction promotes LIMK1 dimerization and subsequent transphosphorylation. Interacts with CDKN1C. Interacts (via LIM domain) with the cytoplasmic domain of NRG1. Interacts with NISCH. Interacts with SSH1. Interacts with RLIM and RNF6. Interacts (via LIM zinc-binding domains) with FAM89B/LRAP25 (via LRR repeat). Forms a tripartite complex with CDC42BPA, CDC42BPB and FAM89B/LRAP25. Post-translationally, autophosphorylated. Phosphorylated on Thr-508 by ROCK1 and PAK1, resulting in activation. Phosphorylated by PAK4 which increases the ability of LIMK1 to phosphorylate cofilin. Phosphorylated at Ser-323 by MAPKAPK2 during activation of VEGFA-induced signaling, which results in activation of LIMK1 and promotion of actin reorganization, cell migration, and tubule formation of endothelial cells. Dephosphorylated and inactivated by SSH1. Phosphorylated by CDC42BP. In terms of processing, ubiquitinated. 'Lys-48'-linked polyubiquitination by RNF6 leads to proteasomal degradation through the 26S proteasome, modulating LIMK1 levels in the growth cone and its effect on axonal outgrowth. Also polyubiquitinated by RLIM. As to expression, highest expression in the nervous system, particularly in the spinal cord and the cranial nerve and dorsal root ganglia.

It localises to the cytoplasm. Its subcellular location is the nucleus. It is found in the cytoskeleton. The protein resides in the cell projection. The protein localises to the lamellipodium. It carries out the reaction L-seryl-[protein] + ATP = O-phospho-L-seryl-[protein] + ADP + H(+). The catalysed reaction is L-threonyl-[protein] + ATP = O-phospho-L-threonyl-[protein] + ADP + H(+). In terms of biological role, serine/threonine-protein kinase that plays an essential role in the regulation of actin filament dynamics. Acts downstream of several Rho family GTPase signal transduction pathways. Activated by upstream kinases including ROCK1, PAK1 and PAK4, which phosphorylate LIMK1 on a threonine residue located in its activation loop. LIMK1 subsequently phosphorylates and inactivates the actin binding/depolymerizing factors cofilin-1/CFL1, cofilin-2/CFL2 and destrin/DSTN, thereby preventing the cleavage of filamentous actin (F-actin), and stabilizing the actin cytoskeleton. In this way LIMK1 regulates several actin-dependent biological processes including cell motility, cell cycle progression, and differentiation. Phosphorylates TPPP on serine residues, thereby promoting microtubule disassembly. Stimulates axonal outgrowth and may be involved in brain development. This Mus musculus (Mouse) protein is LIM domain kinase 1 (Limk1).